The following is a 132-amino-acid chain: Small ribosomal subunit protein uS8 (132 aa).

This sequence belongs to the universal ribosomal protein uS8 family. Part of the 30S ribosomal subunit. Contacts proteins S5 and S12.

One of the primary rRNA binding proteins, it binds directly to 16S rRNA central domain where it helps coordinate assembly of the platform of the 30S subunit. The sequence is that of Small ribosomal subunit protein uS8 from Rhizobium johnstonii (strain DSM 114642 / LMG 32736 / 3841) (Rhizobium leguminosarum bv. viciae).